We begin with the raw amino-acid sequence, 403 residues long: Acetate kinase (403 aa).

Asparagine 7 contributes to the Mg(2+) binding site. ATP is bound at residue lysine 14. Substrate is bound at residue arginine 90. Aspartate 147 (proton donor/acceptor) is an active-site residue. Residues 207–211, 283–285, and 331–335 each bind ATP; these read HIGNG, DMR, and GVGEN. Glutamate 386 contributes to the Mg(2+) binding site.

The protein belongs to the acetokinase family. In terms of assembly, homodimer. Mg(2+) serves as cofactor. The cofactor is Mn(2+).

Its subcellular location is the cytoplasm. It catalyses the reaction acetate + ATP = acetyl phosphate + ADP. It participates in metabolic intermediate biosynthesis; acetyl-CoA biosynthesis; acetyl-CoA from acetate: step 1/2. Its function is as follows. Catalyzes the formation of acetyl phosphate from acetate and ATP. Can also catalyze the reverse reaction. This Thermotoga sp. (strain RQ2) protein is Acetate kinase.